A 68-amino-acid polypeptide reads, in one-letter code: Putative membrane protein insertion efficiency factor (68 aa).

It belongs to the UPF0161 family.

Its subcellular location is the cell membrane. Could be involved in insertion of integral membrane proteins into the membrane. This is Putative membrane protein insertion efficiency factor from Herpetosiphon aurantiacus (strain ATCC 23779 / DSM 785 / 114-95).